Here is a 128-residue protein sequence, read N- to C-terminus: QQSKPEDLLKLRQGLMQTLKSQWVPIAGFAAGKADLPADAAQRAENMAMVAKLAPIGWAKGTEALPNGETKPEAFGSKSAEFLEGWKALATESTKLAAAAKAGPDALKAQAAATGKVCKACHEEFKQD.

Heme c is bound by residues glutamine 13, glutamine 17, glutamate 69, threonine 70, cysteine 118, cysteine 121, and histidine 122.

Homodimer. In terms of processing, binds 1 heme c group covalently per subunit.

Functionally, cytochrome c' is the most widely occurring bacterial c-type cytochrome. Cytochromes c' are high-spin proteins and the heme has no sixth ligand. Their exact function is not known. The protein is Cytochrome c' of Magnetospirillum molischianum (Rhodospirillum molischianum).